The primary structure comprises 127 residues: Fluoride-specific ion channel FluC (127 aa).

The next 4 helical transmembrane spans lie at 8–28, 37–57, 68–88, and 100–120; these read LLIAFGGAIGSIFRYLLQYWF, PWGTLTANLLGSFLIGVVYAI, WKFLLASGFCGGFTTFSTFSY, and ILFLGYICLSVVGGIGFAFAG. Na(+)-binding residues include glycine 78 and threonine 81.

This sequence belongs to the fluoride channel Fluc/FEX (TC 1.A.43) family.

The protein localises to the cell inner membrane. The catalysed reaction is fluoride(in) = fluoride(out). With respect to regulation, na(+) is not transported, but it plays an essential structural role and its presence is essential for fluoride channel function. Functionally, fluoride-specific ion channel. Important for reducing fluoride concentration in the cell, thus reducing its toxicity. This chain is Fluoride-specific ion channel FluC, found in Leptospira interrogans serogroup Icterohaemorrhagiae serovar copenhageni (strain Fiocruz L1-130).